The following is a 291-amino-acid chain: Ribonuclease Z (291 aa).

7 residues coordinate Zn(2+): H61, H63, D65, H66, H133, D201, and H257. The Proton acceptor role is filled by D65.

It belongs to the RNase Z family. In terms of assembly, homodimer. Zn(2+) serves as cofactor.

It carries out the reaction Endonucleolytic cleavage of RNA, removing extra 3' nucleotides from tRNA precursor, generating 3' termini of tRNAs. A 3'-hydroxy group is left at the tRNA terminus and a 5'-phosphoryl group is left at the trailer molecule.. Functionally, zinc phosphodiesterase, which displays some tRNA 3'-processing endonuclease activity. Probably involved in tRNA maturation, by removing a 3'-trailer from precursor tRNA. This is Ribonuclease Z from Saccharolobus islandicus (strain Y.N.15.51 / Yellowstone #2) (Sulfolobus islandicus).